The primary structure comprises 198 residues: Na(+)-translocating NADH-quinone reductase subunit E (198 aa).

6 helical membrane passes run 11-31, 40-60, 77-97, 110-130, 140-160, and 176-196; these read SIFIENLALSFFLGMCTFLAV, GLGIAVVVVQAIAVPANNLVF, FLGFITYIGVIAALVQILEMF, GIFLPLITVNCAIFGGVSFMV, VVYGVGSGISWALAIVLMAAI, and LGITFITAGLMALGFMSFSGI.

This sequence belongs to the NqrDE/RnfAE family. As to quaternary structure, composed of six subunits; NqrA, NqrB, NqrC, NqrD, NqrE and NqrF.

The protein resides in the cell inner membrane. The catalysed reaction is a ubiquinone + n Na(+)(in) + NADH + H(+) = a ubiquinol + n Na(+)(out) + NAD(+). Its function is as follows. NQR complex catalyzes the reduction of ubiquinone-1 to ubiquinol by two successive reactions, coupled with the transport of Na(+) ions from the cytoplasm to the periplasm. NqrA to NqrE are probably involved in the second step, the conversion of ubisemiquinone to ubiquinol. The protein is Na(+)-translocating NADH-quinone reductase subunit E of Tolumonas auensis (strain DSM 9187 / NBRC 110442 / TA 4).